The chain runs to 94 residues: Small ribosomal subunit protein uS19c (94 aa).

It belongs to the universal ribosomal protein uS19 family.

It localises to the plastid. The protein localises to the chloroplast. Functionally, protein S19 forms a complex with S13 that binds strongly to the 16S ribosomal RNA. The sequence is that of Small ribosomal subunit protein uS19c from Cyanidioschyzon merolae (strain NIES-3377 / 10D) (Unicellular red alga).